A 147-amino-acid chain; its full sequence is Succinate dehydrogenase assembly factor 2, mitochondrial (147 aa).

Belongs to the SDHAF2 family. As to quaternary structure, interacts with the flavoprotein subunit within the SDH catalytic dimer.

It localises to the mitochondrion matrix. Its function is as follows. Plays an essential role in the assembly of succinate dehydrogenase (SDH), an enzyme complex (also referred to as respiratory complex II) that is a component of both the tricarboxylic acid (TCA) cycle and the mitochondrial electron transport chain, and which couples the oxidation of succinate to fumarate with the reduction of ubiquinone (coenzyme Q) to ubiquinol. Required for flavinylation (covalent attachment of FAD) of the flavoprotein subunit of the SDH catalytic dimer. The sequence is that of Succinate dehydrogenase assembly factor 2, mitochondrial from Drosophila grimshawi (Hawaiian fruit fly).